The sequence spans 1196 residues: Homeodomain-interacting protein kinase 2 (1196 aa).

Phosphoserine is present on serine 16. Residue lysine 32 forms a Glycyl lysine isopeptide (Lys-Gly) (interchain with G-Cter in SUMO); alternate linkage. Lysine 32 is covalently cross-linked (Glycyl lysine isopeptide (Lys-Gly) (interchain with G-Cter in SUMO2); alternate). Residues 50 to 69 (VYSQSKNIPPSQPASTTVST) form a disordered region. The transcriptional corepression stretch occupies residues 97 to 230 (SASSTSVTGQ…TNEIVAIKIL (134 aa)). A phosphoserine mark is found at serine 118 and serine 135. A Phosphothreonine modification is found at threonine 141. Residues 189–520 (HEVLCSMTNT…DADKRVTPIE (332 aa)) form an interaction with DAXX region. Residues 199-527 (YEVLEFLGRG…PIETLNHPFV (329 aa)) enclose the Protein kinase domain. ATP-binding positions include 205–213 (LGRGTFGQV) and lysine 228. Residues threonine 252 and threonine 273 each carry the phosphothreonine modification. The Proton acceptor role is filled by aspartate 324. Tyrosine 361 carries the post-translational modification Phosphotyrosine; by autocatalysis. Serine 441 is subject to Phosphoserine. Phosphothreonine is present on residues threonine 482, threonine 517, and threonine 566. The segment at 539–844 (AHVKSCFQNM…KENTPPRCAM (306 aa)) is interaction with SKI and SMAD1. The tract at residues 600-800 (SATLSLANPE…MRQQPTSTTS (201 aa)) is interaction with DAZAP2. A phosphoserine mark is found at serine 634 and serine 668. Position 687 is a phosphothreonine (threonine 687). Positions 752–897 (RNTHAHGSHY…ITISSDTDEE (146 aa)) are interaction with POU4F1. Residues 774–876 (HVTLPAAQPL…TRERQRQTIV (103 aa)) form an interaction with CTBP1 region. Residues 787 to 897 (VAHVMRQQPT…ITISSDTDEE (111 aa)) are interaction with HMGA1. 2 disordered regions span residues 792-847 (RQQP…MVHS) and 891-963 (SSDT…CTGN). Positions 793 to 829 (QQPTSTTSSRKSKQHQSSVRNVSTCEVTSSQAISSPQ) are enriched in polar residues. The short motif at 802-805 (RKSK) is the Nuclear localization signal 1 (NLS1) element. Phosphoserine is present on residues serine 815 and serine 827. Positions 832–835 (KRVK) match the Nuclear localization signal 2 (NLS2) motif. Residues 839–934 (PPRCAMVHSS…PYSDSSSNTS (96 aa)) are interaction with TP53 and TP73. The segment at 873–907 (QTIVIPDTPSPTVSVITISSDTDEEEEQKHAPTST) is interaction with UBE2I. The segment at 873-980 (QTIVIPDTPS…PLKTQASEVL (108 aa)) is localization to nuclear speckles. Positions 873-980 (QTIVIPDTPS…PLKTQASEVL (108 aa)) are required for localization to nuclear speckles. Residues 884 to 908 (TVSVITISSDTDEEEEQKHAPTSTV) form an SUMO interaction motifs (SIM); required for nuclear localization and kinase activity region. Over residues 923–937 (DSPYSDSSSNTSPYS) the composition is skewed to low complexity. Serine 934 is subject to Phosphoserine. The segment at 935 to 1050 (PYSVQQRTGH…LSQAQQHMAA (116 aa)) is interaction with AXIN1. Positions 938 to 951 (VQQRTGHNGTNTLD) are enriched in polar residues. Glycyl lysine isopeptide (Lys-Gly) (interchain with G-Cter in SUMO2) cross-links involve residues lysine 953 and lysine 973. An autoinhibitory domain (AID) region spans residues 984–1196 (DSLGPAISAS…PAKVNQYPYI (213 aa)). Phosphoserine is present on residues serine 991, serine 993, serine 1042, serine 1153, and serine 1186. Over residues 991–1046 (SASHHSSSFKSKSSSTVTSTSGHSSGSSSGAIAYRQQRPGPHFQQQQPLNLSQAQQ) the composition is skewed to low complexity. A disordered region spans residues 991–1058 (SASHHSSSFK…AADRTGSHRR (68 aa)). A Glycyl lysine isopeptide (Lys-Gly) (interchain with G-Cter in SUMO) cross-link involves residue lysine 1189.

The protein belongs to the protein kinase superfamily. CMGC Ser/Thr protein kinase family. HIPK subfamily. Interacts with CREB1, SIAH1, WSB1, CBX4, TRADD, p53/TP53, TP73, TP63, CREBBP, DAXX, P53DINP1, SKI, SMAD1, SMAD2 and SMAD3, but not SMAD4. Interacts with SP100; positively regulates TP53-dependent transcription. Interacts with ATF1, PML, RUNX1, EP300, NKX1-2, NKX2-5, UBE2I, HMGA1, CTBP1, AXIN1, NLK, MYB, POU4F1, POU4F2, POU4F3, UBE2I, UBL1 and ZBTB4. Probably part of a complex consisting of p53/TP53, HIPK2 and AXIN1. Interacts with DAZAP2; the interaction results in phosphorylation of DAZAP2 which causes localization of DAZAP2 to the nucleus, reduces interaction of DAZAP2 with HIPK2 and prevents DAZAP2-dependent degradation of HIPK2. Interacts with SIAH1; the interaction is promoted by DAZAP2 and results in SIAH1-mediated ubiquitination and subsequent proteasomal degradation of HIPK2. In terms of assembly, interacts with SPN/CD43 cytoplasmic tail. Sumoylated. When conjugated it is directed to nuclear speckles. Desumoylated by SENP1. Sumoylation on Lys-32 is promoted by the E3 SUMO-protein ligase CBX4. In terms of processing, autophosphorylation at Tyr-361 in the activation loop activates the kinase and promotes nuclear localization. Post-translationally, ubiquitinated by FBXO3, WSB1 and SIAH1, leading to rapid proteasome-dependent degradation. The degradation mediated by FBXO3, but not ubiquitination, is prevented in the presence of PML. The degradation mediated by WSB1 and SIAH1 is reversibly reduced upon DNA damage. Cleaved at Asp-923 and Asp-984 by CASP6 in a p53/TP53-dependent manner. The cleaved form lacks the autoinhibitory C-terminal domain (AID), resulting in a hyperactive kinase, which potentiates p53/TP53 Ser-46 phosphorylation and subsequent activation of the cell death machinery. As to expression, ubiquitous. Abundant in muscle, heart, small intestine, stomach, kidney and brain; and low in testis, skin and lung.

Its subcellular location is the nucleus. The protein localises to the PML body. It localises to the cytoplasm. It carries out the reaction L-seryl-[protein] + ATP = O-phospho-L-seryl-[protein] + ADP + H(+). The catalysed reaction is L-threonyl-[protein] + ATP = O-phospho-L-threonyl-[protein] + ADP + H(+). Functionally, serine/threonine-protein kinase involved in transcription regulation, p53/TP53-mediated cellular apoptosis and regulation of the cell cycle. Acts as a corepressor of several transcription factors, including SMAD1 and POU4F1/Brn3a and probably NK homeodomain transcription factors. Phosphorylates PDX1, ATF1, PML, p53/TP53, CREB1, CTBP1, CBX4, RUNX1, EP300, CTNNB1, HMGA1, ZBTB4 and DAZAP2. Inhibits cell growth and promotes apoptosis through the activation of p53/TP53 both at the transcription level and at the protein level (by phosphorylation and indirect acetylation). The phosphorylation of p53/TP53 may be mediated by a p53/TP53-HIPK2-AXIN1 complex. Involved in the response to hypoxia by acting as a transcriptional co-suppressor of HIF1A. Mediates transcriptional activation of TP73. In response to TGFB, cooperates with DAXX to activate JNK. Negative regulator through phosphorylation and subsequent proteasomal degradation of CTNNB1 and the antiapoptotic factor CTBP1. In the Wnt/beta-catenin signaling pathway acts as an intermediate kinase between MAP3K7/TAK1 and NLK to promote the proteasomal degradation of MYB. Phosphorylates CBX4 upon DNA damage and promotes its E3 SUMO-protein ligase activity. Activates CREB1 and ATF1 transcription factors by phosphorylation in response to genotoxic stress. In response to DNA damage, stabilizes PML by phosphorylation. PML, HIPK2 and FBXO3 may act synergically to activate p53/TP53-dependent transactivation. Promotes angiogenesis, and is involved in erythroid differentiation, especially during fetal liver erythropoiesis. Phosphorylation of RUNX1 and EP300 stimulates EP300 transcription regulation activity. Triggers ZBTB4 protein degradation in response to DNA damage. In response to DNA damage, phosphorylates DAZAP2 which localizes DAZAP2 to the nucleus, reduces interaction of DAZAP2 with HIPK2 and prevents DAZAP2-dependent ubiquitination of HIPK2 by E3 ubiquitin-protein ligase SIAH1 and subsequent proteasomal degradation. Modulates HMGA1 DNA-binding affinity. In response to high glucose, triggers phosphorylation-mediated subnuclear localization shifting of PDX1. Involved in the regulation of eye size, lens formation and retinal lamination during late embryogenesis. The polypeptide is Homeodomain-interacting protein kinase 2 (Hipk2) (Mus musculus (Mouse)).